Consider the following 313-residue polypeptide: Ribosomal RNA small subunit methyltransferase H (313 aa).

Residues 33-35 (AGH), Asp-53, Phe-82, Asp-103, and Gln-110 each bind S-adenosyl-L-methionine.

Belongs to the methyltransferase superfamily. RsmH family.

It is found in the cytoplasm. The enzyme catalyses cytidine(1402) in 16S rRNA + S-adenosyl-L-methionine = N(4)-methylcytidine(1402) in 16S rRNA + S-adenosyl-L-homocysteine + H(+). In terms of biological role, specifically methylates the N4 position of cytidine in position 1402 (C1402) of 16S rRNA. This Acetivibrio thermocellus (strain ATCC 27405 / DSM 1237 / JCM 9322 / NBRC 103400 / NCIMB 10682 / NRRL B-4536 / VPI 7372) (Clostridium thermocellum) protein is Ribosomal RNA small subunit methyltransferase H.